The sequence spans 341 residues: Nucleoid-associated protein Sden_2335 (341 aa).

Belongs to the YejK family.

The protein localises to the cytoplasm. It is found in the nucleoid. This chain is Nucleoid-associated protein Sden_2335, found in Shewanella denitrificans (strain OS217 / ATCC BAA-1090 / DSM 15013).